A 467-amino-acid polypeptide reads, in one-letter code: Zinc finger and BTB domain-containing protein 43 (467 aa).

M1 carries the N-acetylmethionine modification. The region spanning 33-97 is the BTB domain; that stretch reads CDVSIVVQGH…SYTGRLVMPA (65 aa). 2 disordered regions span residues 134-153 and 162-225; these read LNHG…GLVE and HTDF…SAEF. Composition is skewed to basic and acidic residues over residues 164-174 and 182-194; these read DFPKAQELRDG and KDEL…EHEY. Residues K182, K241, K247, K297, and K358 each participate in a glycyl lysine isopeptide (Lys-Gly) (interchain with G-Cter in SUMO2) cross-link. A C2H2-type 1; atypical zinc finger spans residues 373-394; sequence YPCQCGKSFTHKSQRDRHMSMH. The C2H2-type 2 zinc finger occupies 400–422; the sequence is YGCGVCGKKFKMKHHLVGHMKIH. At T423 the chain carries Phosphothreonine. Residues 428–450 form a C2H2-type 3; atypical zinc finger; the sequence is YECNICAKRFMWRDSFHRHVTSC. A Glycyl lysine isopeptide (Lys-Gly) (interchain with G-Cter in SUMO2) cross-link involves residue K458.

The protein belongs to the krueppel C2H2-type zinc-finger protein family. In terms of assembly, interacts with BDP1.

The protein resides in the nucleus. Its function is as follows. May be involved in transcriptional regulation. The protein is Zinc finger and BTB domain-containing protein 43 (ZBTB43) of Homo sapiens (Human).